The chain runs to 361 residues: Chorismate synthase (361 aa).

NADP(+) is bound by residues Arg-48 and Arg-54. FMN contacts are provided by residues 125–127 (RSS), 238–239 (NA), Gly-278, 293–297 (KPTSS), and Arg-319.

The protein belongs to the chorismate synthase family. Homotetramer. The cofactor is FMNH2.

It carries out the reaction 5-O-(1-carboxyvinyl)-3-phosphoshikimate = chorismate + phosphate. It participates in metabolic intermediate biosynthesis; chorismate biosynthesis; chorismate from D-erythrose 4-phosphate and phosphoenolpyruvate: step 7/7. In terms of biological role, catalyzes the anti-1,4-elimination of the C-3 phosphate and the C-6 proR hydrogen from 5-enolpyruvylshikimate-3-phosphate (EPSP) to yield chorismate, which is the branch point compound that serves as the starting substrate for the three terminal pathways of aromatic amino acid biosynthesis. This reaction introduces a second double bond into the aromatic ring system. This chain is Chorismate synthase, found in Salmonella choleraesuis (strain SC-B67).